The sequence spans 62 residues: Large ribosomal subunit protein bL33 (62 aa).

This sequence belongs to the bacterial ribosomal protein bL33 family.

This Bacteroides thetaiotaomicron (strain ATCC 29148 / DSM 2079 / JCM 5827 / CCUG 10774 / NCTC 10582 / VPI-5482 / E50) protein is Large ribosomal subunit protein bL33.